A 349-amino-acid polypeptide reads, in one-letter code: Probable dual-specificity RNA methyltransferase RlmN (349 aa).

The active-site Proton acceptor is the E94. The 225-residue stretch at 100-324 (YKTHTSICLS…NKNNVNTTIR (225 aa)) folds into the Radical SAM core domain. C107 and C335 are oxidised to a cystine. Positions 114, 118, and 121 each coordinate [4Fe-4S] cluster. S-adenosyl-L-methionine is bound by residues 161-162 (GE), S193, 216-218 (SLH), and N292. C335 serves as the catalytic S-methylcysteine intermediate.

Belongs to the radical SAM superfamily. RlmN family. It depends on [4Fe-4S] cluster as a cofactor.

Its subcellular location is the cytoplasm. The enzyme catalyses adenosine(2503) in 23S rRNA + 2 reduced [2Fe-2S]-[ferredoxin] + 2 S-adenosyl-L-methionine = 2-methyladenosine(2503) in 23S rRNA + 5'-deoxyadenosine + L-methionine + 2 oxidized [2Fe-2S]-[ferredoxin] + S-adenosyl-L-homocysteine. It catalyses the reaction adenosine(37) in tRNA + 2 reduced [2Fe-2S]-[ferredoxin] + 2 S-adenosyl-L-methionine = 2-methyladenosine(37) in tRNA + 5'-deoxyadenosine + L-methionine + 2 oxidized [2Fe-2S]-[ferredoxin] + S-adenosyl-L-homocysteine. Specifically methylates position 2 of adenine 2503 in 23S rRNA and position 2 of adenine 37 in tRNAs. The chain is Probable dual-specificity RNA methyltransferase RlmN from Finegoldia magna (strain ATCC 29328 / DSM 20472 / WAL 2508) (Peptostreptococcus magnus).